We begin with the raw amino-acid sequence, 431 residues long: Nuclear bridge Ish domain protein les1 (431 aa).

A signal peptide spans 1 to 21 (MQPRFLLHGALLALGIQLCLS).

It localises to the nucleus inner membrane. Inner nuclear envelope protein involved in nuclear fission, which is achieved via local disassembly of nuclear pores within the narrow bridge that links segregating daughter nuclei. Les1 restricts the process of local nuclear envelope breakdown to the bridge midzone to prevent the leakage of material from daughter nuclei during mitosis. The polypeptide is Nuclear bridge Ish domain protein les1 (Schizosaccharomyces pombe (strain 972 / ATCC 24843) (Fission yeast)).